Consider the following 366-residue polypeptide: MTYKRIDTSEYPQQLAQKADRVREMFRPFHLNEVEVFESPASHYRMRAEFRVWHEGDDLYYIMFNPETREKIRMNEFIPGSLLINELMKELISLLKPNDVLRRKLFQVDFLTTTTGEAIISLLYHRPLDDQWEQEAIQLREALTSIAKVEVIGRARKQKRVLYKESVTEEVKVDGKSYLSLQTENSFTQPNAIINQQMISWAKRHAGNNSHDLLELYCGNGNFTLPLAENFNRVLATEISKSSVAAARENAELNNIKNVTVVRMSAEEFSAALSGELESKRAADAEIHSFDCQTVLVDPPRAGLDKDTLKLVSQYQRIIYISCNPETLTENIHDLSSSHKVTAAAMFDQFPYTDHIETGVVLERKS.

Gln-189, Tyr-217, Asn-222, Glu-238, and Asp-298 together coordinate S-adenosyl-L-methionine. Cys-323 (nucleophile) is an active-site residue. Glu-357 functions as the Proton acceptor in the catalytic mechanism.

It belongs to the class I-like SAM-binding methyltransferase superfamily. RNA M5U methyltransferase family. TrmA subfamily.

The catalysed reaction is uridine(54) in tRNA + S-adenosyl-L-methionine = 5-methyluridine(54) in tRNA + S-adenosyl-L-homocysteine + H(+). It catalyses the reaction uridine(341) in tmRNA + S-adenosyl-L-methionine = 5-methyluridine(341) in tmRNA + S-adenosyl-L-homocysteine + H(+). Functionally, dual-specificity methyltransferase that catalyzes the formation of 5-methyluridine at position 54 (m5U54) in all tRNAs, and that of position 341 (m5U341) in tmRNA (transfer-mRNA). The sequence is that of tRNA/tmRNA (uracil-C(5))-methyltransferase from Idiomarina loihiensis (strain ATCC BAA-735 / DSM 15497 / L2-TR).